A 141-amino-acid chain; its full sequence is Hemoglobin subunit alpha (141 aa).

In terms of domain architecture, Globin spans 1–141 (VLSSKDKTNV…VSTVLTSKYR (141 aa)). Phosphoserine is present on Ser3. Lys7 carries the post-translational modification N6-succinyllysine. The residue at position 8 (Thr8) is a Phosphothreonine. N6-succinyllysine is present on Lys11. Lys16 bears the N6-acetyllysine; alternate mark. Lys16 carries the post-translational modification N6-succinyllysine; alternate. Position 24 is a phosphotyrosine (Tyr24). N6-succinyllysine is present on Lys40. Residue Ser49 is modified to Phosphoserine. His58 contacts O2. His87 is a heme b binding site. Ser102 is modified (phosphoserine). Position 108 is a phosphothreonine (Thr108). The residue at position 124 (Ser124) is a Phosphoserine. Residues Thr134 and Thr137 each carry the phosphothreonine modification. Ser138 is subject to Phosphoserine.

The protein belongs to the globin family. In terms of assembly, heterotetramer of two alpha chains and two beta chains. Red blood cells.

Involved in oxygen transport from the lung to the various peripheral tissues. Functionally, hemopressin acts as an antagonist peptide of the cannabinoid receptor CNR1. Hemopressin-binding efficiently blocks cannabinoid receptor CNR1 and subsequent signaling. The sequence is that of Hemoglobin subunit alpha (HBA) from Camelus dromedarius (Dromedary).